The sequence spans 554 residues: Suppressor of hairless homolog (554 aa).

The interval 1–31 is disordered; the sequence is MYHPHHLPAHGQVQSHQHREDAAATSSRDVN. 3 DNA-binding regions span residues 83-90, 218-227, and 291-323; these read KSYGNEKR, RLRSQTVSTR, and RKVD…ERMY. An IPT/TIG domain is found at 381–471; the sequence is PNVHSLQLNG…YPTNLTFTFT (91 aa). The segment at 489-554 is disordered; the sequence is GSKRPSASMP…NGANMLRTAS (66 aa). The span at 508–519 shows a compositional bias: basic and acidic residues; the sequence is DSGRGNESDRGD.

Belongs to the Su(H) family. In terms of assembly, interacts with activated Notch proteins.

The protein localises to the nucleus. In terms of biological role, transcriptional regulator that plays a central role in Notch signaling, a signaling pathway involved in cell-cell communication that regulates a broad spectrum of cell-fate determinations. Acts as a transcriptional repressor when it is not associated with Notch proteins. When associated with some Notch protein, it acts as a transcriptional activator that activates transcription of Notch target genes. Required for the transcriptional expression of Brachyury, suggesting that it participates in notochord differentiation. In Ciona intestinalis (Transparent sea squirt), this protein is Suppressor of hairless homolog (Su(H)).